A 272-amino-acid chain; its full sequence is Putative pyruvate, phosphate dikinase regulatory protein (272 aa).

Position 151 to 158 (151 to 158) interacts with ADP; sequence GISRTSKT.

It belongs to the pyruvate, phosphate/water dikinase regulatory protein family. PDRP subfamily.

The catalysed reaction is N(tele)-phospho-L-histidyl/L-threonyl-[pyruvate, phosphate dikinase] + ADP = N(tele)-phospho-L-histidyl/O-phospho-L-threonyl-[pyruvate, phosphate dikinase] + AMP + H(+). It catalyses the reaction N(tele)-phospho-L-histidyl/O-phospho-L-threonyl-[pyruvate, phosphate dikinase] + phosphate + H(+) = N(tele)-phospho-L-histidyl/L-threonyl-[pyruvate, phosphate dikinase] + diphosphate. Bifunctional serine/threonine kinase and phosphorylase involved in the regulation of the pyruvate, phosphate dikinase (PPDK) by catalyzing its phosphorylation/dephosphorylation. The chain is Putative pyruvate, phosphate dikinase regulatory protein from Staphylococcus aureus (strain USA300).